A 126-amino-acid chain; its full sequence is NADP-reducing hydrogenase subunit HndB (126 aa).

As to quaternary structure, heterotetramer composed of HndA, HndB, HndC and HndD subunits. HndA and HndB could form a heterodimeric intermediate in the electron transfer between the active site of hydrogenase subunit HndD and the NADP reduction site of the reducing subunit HndC.

It carries out the reaction H2 + NADP(+) = NADPH + H(+). Its activity is regulated as follows. Inhibited by oxygen. Catalyzes the reduction of NADP in the presence of molecular H2 to yield NADPH. The chain is NADP-reducing hydrogenase subunit HndB (hndB) from Solidesulfovibrio fructosivorans (Desulfovibrio fructosivorans).